The sequence spans 491 residues: bZIP transcription factor hapX (491 aa).

Residues 19-73 form a disordered region; the sequence is AKPAISPSPGPGTPGSITSKEWVIPPRPKPGRKPATDTPPTKRKAQNRAAQRAFR. In terms of domain architecture, bZIP spans 55-95; it reads DTPPTKRKAQNRAAQRAFRERRAARVNELEEQIKKIEDEHE. Residues 60–79 form a basic motif region; the sequence is KRKAQNRAAQRAFRERRAAR. Positions 83-90 are leucine-zipper; it reads LEEQIKKI. Residues 149–161 show a composition bias toward basic and acidic residues; it reads SSLSDREAVRSDK. Disordered stretches follow at residues 149–196, 224–245, and 397–416; these read SSLS…REEV, EQSR…KPDP, and VSRG…SAAP. The segment covering 397–413 has biased composition (low complexity); that stretch reads VSRGRSGSNNNTSSGSS.

Belongs to the bZIP family. YAP subfamily.

The protein resides in the nucleus. In terms of biological role, transcription factor required for repression of genes during iron starvation. Represses iron-dependent and mitochondrial-localized activities including respiration, TCA cycle, amino acid metabolism, iron-sulfur-cluster and heme biosynthesis. Iron starvation causes a massive remodeling of the amino acid pool and hapX is essential for the coordination of the production of siderophores and their precursor ornithine. The sequence is that of bZIP transcription factor hapX from Aspergillus fumigatus (strain ATCC MYA-4609 / CBS 101355 / FGSC A1100 / Af293) (Neosartorya fumigata).